The chain runs to 302 residues: tRNA dimethylallyltransferase (302 aa).

21 to 28 (GPTASGKS) contributes to the ATP binding site. 23 to 28 (TASGKS) provides a ligand contact to substrate.

It belongs to the IPP transferase family. In terms of assembly, monomer. Requires Mg(2+) as cofactor.

It catalyses the reaction adenosine(37) in tRNA + dimethylallyl diphosphate = N(6)-dimethylallyladenosine(37) in tRNA + diphosphate. Catalyzes the transfer of a dimethylallyl group onto the adenine at position 37 in tRNAs that read codons beginning with uridine, leading to the formation of N6-(dimethylallyl)adenosine (i(6)A). This chain is tRNA dimethylallyltransferase, found in Paracoccus denitrificans (strain Pd 1222).